The chain runs to 506 residues: Histidine ammonia-lyase (506 aa).

Residues 143–145 (ASG) constitute a cross-link (5-imidazolinone (Ala-Gly)). S144 is subject to 2,3-didehydroalanine (Ser).

It belongs to the PAL/histidase family. Post-translationally, contains an active site 4-methylidene-imidazol-5-one (MIO), which is formed autocatalytically by cyclization and dehydration of residues Ala-Ser-Gly.

It localises to the cytoplasm. The enzyme catalyses L-histidine = trans-urocanate + NH4(+). The protein operates within amino-acid degradation; L-histidine degradation into L-glutamate; N-formimidoyl-L-glutamate from L-histidine: step 1/3. The chain is Histidine ammonia-lyase from Salmonella arizonae (strain ATCC BAA-731 / CDC346-86 / RSK2980).